The chain runs to 412 residues: [Pyruvate dehydrogenase (acetyl-transferring)] kinase isozyme 4, mitochondrial (412 aa).

In terms of domain architecture, Histidine kinase spans 138-368 (ILEYKDNCTV…DAIIYLKALS (231 aa)). ATP-binding positions include 254-261 (ELFKNAMR), Asp293, 312-313 (ST), and 329-334 (GFGYGL).

This sequence belongs to the PDK/BCKDK protein kinase family. As to quaternary structure, homodimer. Interacts with the pyruvate dehydrogenase complex subunit DLAT, and is part of the multimeric pyruvate dehydrogenase complex that contains multiple copies of pyruvate dehydrogenase (E1), dihydrolipoamide acetyltransferase (DLAT, E2) and lipoamide dehydrogenase (DLD, E3). Ubiquitous; highest levels of expression in heart and skeletal muscle.

Its subcellular location is the mitochondrion matrix. It catalyses the reaction L-seryl-[pyruvate dehydrogenase E1 alpha subunit] + ATP = O-phospho-L-seryl-[pyruvate dehydrogenase E1 alpha subunit] + ADP + H(+). Kinase that plays a key role in regulation of glucose and fatty acid metabolism and homeostasis via phosphorylation of the pyruvate dehydrogenase subunits PDHA1 and PDHA2. This inhibits pyruvate dehydrogenase activity, and thereby regulates metabolite flux through the tricarboxylic acid cycle, down-regulates aerobic respiration and inhibits the formation of acetyl-coenzyme A from pyruvate. Inhibition of pyruvate dehydrogenase decreases glucose utilization and increases fat metabolism in response to prolonged fasting and starvation. Plays an important role in maintaining normal blood glucose levels under starvation, and is involved in the insulin signaling cascade. Via its regulation of pyruvate dehydrogenase activity, plays an important role in maintaining normal blood pH and in preventing the accumulation of ketone bodies under starvation. In the fed state, mediates cellular responses to glucose levels and to a high-fat diet. Regulates both fatty acid oxidation and de novo fatty acid biosynthesis. Plays a role in the generation of reactive oxygen species. Protects detached epithelial cells against anoikis. Plays a role in cell proliferation via its role in regulating carbohydrate and fatty acid metabolism. This Rattus norvegicus (Rat) protein is [Pyruvate dehydrogenase (acetyl-transferring)] kinase isozyme 4, mitochondrial (Pdk4).